The sequence spans 376 residues: Alpha-2,8-sialyltransferase 8E (376 aa).

Residues 17-37 traverse the membrane as a helical segment; sequence TLLFIFICAFALVTLLQQILY. Asn-56 carries N-linked (GlcNAc...) asparagine glycosylation. 2 disulfides stabilise this stretch: Cys-164/Cys-313 and Cys-178/Cys-373. Residues Asn-192 and 214–216 each bind substrate; that span reads NPS. Asn-241 carries N-linked (GlcNAc...) asparagine glycosylation. 300–302 provides a ligand contact to substrate; sequence STG. The Proton donor/acceptor role is filled by His-348.

It belongs to the glycosyltransferase 29 family. As to expression, expressed in liver.

Its subcellular location is the golgi apparatus membrane. It carries out the reaction a ganglioside GT1b (d18:1(4E)) + CMP-N-acetyl-beta-neuraminate = a ganglioside GQ1b (d18:1(4E)) + CMP + H(+). The enzyme catalyses a ganglioside GQ1c (d18:1(4E)) + CMP-N-acetyl-beta-neuraminate = a ganglioside GP1c (d18:1(4E)) + CMP + H(+). The catalysed reaction is a ganglioside GD3 (d18:1(4E)) + CMP-N-acetyl-beta-neuraminate = a ganglioside GT3 (d18:1(4E)) + CMP + H(+). It catalyses the reaction a ganglioside GD1a (d18:1(4E)) + CMP-N-acetyl-beta-neuraminate = a ganglioside GT1a (d18:1(4E)) + CMP + H(+). It carries out the reaction a ganglioside GM1b (d18:1(4E)) + CMP-N-acetyl-beta-neuraminate = a ganglioside GD1c (d18:1(4E)) + CMP + H(+). Its pathway is protein modification; protein glycosylation. In terms of biological role, involved in the synthesis of gangliosides GD1c, GT1a, GQ1b, GP1c and GT3 from GD1a, GT1b, GM1b and GD3 respectively. This is Alpha-2,8-sialyltransferase 8E from Rattus norvegicus (Rat).